Here is a 186-residue protein sequence, read N- to C-terminus: Oligoribonuclease (186 aa).

In terms of domain architecture, Exonuclease spans 8-171; the sequence is LIWIDLEMTG…DDIRESIAEL (164 aa). Residue tyrosine 129 is part of the active site.

Belongs to the oligoribonuclease family.

The protein localises to the cytoplasm. Its function is as follows. 3'-to-5' exoribonuclease specific for small oligoribonucleotides. The polypeptide is Oligoribonuclease (Mannheimia succiniciproducens (strain KCTC 0769BP / MBEL55E)).